The primary structure comprises 259 residues: Proteasome subunit alpha 1 (259 aa).

Residues 231–259 are disordered; that stretch reads LVPAEPAAASESAPEPKPDTETKPADTQD. The segment covering 233–243 has biased composition (low complexity); that stretch reads PAEPAAASESA. Over residues 244-259 the composition is skewed to basic and acidic residues; the sequence is PEPKPDTETKPADTQD.

The protein belongs to the peptidase T1A family. As to quaternary structure, the 20S proteasome core is composed of 14 alpha and 14 beta subunits that assemble into four stacked heptameric rings, resulting in a barrel-shaped structure. The two inner rings, each composed of seven catalytic beta subunits, are sandwiched by two outer rings, each composed of seven alpha subunits. All four combinations of alpha- and beta-subunits (beta2-alpha1, beta2-alpha2, beta1-alpha2 and beta1-alpha1) yield fully assembled and proteolytically active proteasomes. The catalytic chamber with the active sites is on the inside of the barrel. Has probably a gated structure, the ends of the cylinder being occluded by the N-termini of the alpha-subunits. Is likely capped by the proteasome-associated ATPase, ARC. Post-translationally, the N-terminus is blocked.

The protein localises to the cytoplasm. The protein operates within protein degradation; proteasomal Pup-dependent pathway. The formation of the proteasomal ATPase ARC-20S proteasome complex, likely via the docking of the C-termini of ARC into the intersubunit pockets in the alpha-rings, may trigger opening of the gate for substrate entry. Interconversion between the open-gate and close-gate conformations leads to a dynamic regulation of the 20S proteasome proteolysis activity. In terms of biological role, component of the proteasome core, a large protease complex with broad specificity involved in protein degradation. The R.erythropolis proteasomes are able to cleave oligopeptides after Tyr, Phe and Leu, very poorly after Arg but not after Glu. Thus, displays chymotrypsin-like activity, low trypsin-like activity but no caspase-like activity. The polypeptide is Proteasome subunit alpha 1 (Rhodococcus erythropolis (Arthrobacter picolinophilus)).